Here is a 364-residue protein sequence, read N- to C-terminus: Medium-wave-sensitive opsin 1 (364 aa).

The segment at 1–24 is disordered; it reads MAQRWDPQRLAGGQPQDSHEDSTQ. The Extracellular segment spans residues 1 to 52; the sequence is MAQRWDPQRLAGGQPQDSHEDSTQSSIFTYTNSNATRGPFEGPNYHIAPRWV. Residues 17–43 are required for 11-cis-retinal regeneration; sequence DSHEDSTQSSIFTYTNSNATRGPFEGP. The N-linked (GlcNAc...) asparagine glycan is linked to asparagine 34. A helical membrane pass occupies residues 53–77; that stretch reads YHITSTWMIIVVIASVFTNGLVLVA. Residues 78–89 are Cytoplasmic-facing; the sequence is TMKFKKLRHPLN. The helical transmembrane segment at 90-115 threads the bilayer; that stretch reads WILVNLAIADLAETVIASTISVVNQL. Topologically, residues 116-129 are extracellular; sequence YGYFVLGHPLCVVE. Cysteine 126 and cysteine 203 are disulfide-bonded. The chain crosses the membrane as a helical span at residues 130–149; it reads GYTVSVCGITGLWSLAIISW. Residues 150–168 lie on the Cytoplasmic side of the membrane; it reads ERWLVVCKPFGNMRFDAKL. The helical transmembrane segment at 169 to 192 threads the bilayer; the sequence is AIVGIAFSWIWSAVWTAPPIFGWS. The Extracellular portion of the chain corresponds to 193–218; sequence RYWPYGLKTSCGPDVFSGTSYPGVQS. Residues 219-246 form a helical membrane-spanning segment; it reads YMMVLMVTCCIIPLSIIILCYLQVWLAI. At 247–268 the chain is on the cytoplasmic side; it reads RAVAKQQKESESTQKAEKEVTR. Residues 269-292 traverse the membrane as a helical segment; sequence MVVVMVFAYCLCWGPYTFFACFAT. Residues 293 to 300 are Extracellular-facing; sequence ANPGYAFH. A helical membrane pass occupies residues 301–320; the sequence is PLVAALPAYFAKSATIYNPI. At lysine 312 the chain carries N6-(retinylidene)lysine. Residues 321–364 lie on the Cytoplasmic side of the membrane; the sequence is IYVFMNRQFRNCILQLFGKKVDDTSELSSASKTEASSVSSVSPA.

This sequence belongs to the G-protein coupled receptor 1 family. Opsin subfamily. As to quaternary structure, monomer. Homodimer. Homotetramer. Post-translationally, O-glycosylated. In terms of processing, phosphorylated on some or all of the serine and threonine residues present in the C-terminal region. In terms of tissue distribution, expressed in cone photoreceptor cells.

It is found in the membrane. Functionally, visual pigments are the light-absorbing molecules that mediate vision. They consist of an apoprotein, opsin, covalently linked to cis-retinal. May increase spectral sensitivity in dim light. The polypeptide is Medium-wave-sensitive opsin 1 (OPN1MW) (Sciurus carolinensis (Eastern gray squirrel)).